The sequence spans 161 residues: TRAF-interacting protein with FHA domain-containing protein B (161 aa).

The FHA domain maps to 36-91; it reads LLLGRGQDAHLQLQLPRLSRRHLSLEPYLEKGSALLAFCLKALSRKGCVWVNGLTL.

In terms of assembly, interacts with TIFA.

Its function is as follows. Inhibits TIFA-mediated TRAF6 activation possibly by inducing a conformational change in TIFA. This is TRAF-interacting protein with FHA domain-containing protein B from Homo sapiens (Human).